Reading from the N-terminus, the 332-residue chain is Beta-chimaerin (332 aa).

The Phorbol-ester/DAG-type zinc-finger motif lies at 78–128 (THNFKVHTFRGPHWCEYCANFMWGLIAQGVRCSDCGLNVHKQCSKHVPNDC). The Rho-GAP domain maps to 141–332 (CDLTTLVKAH…ILIENEDVLF (192 aa)).

It localises to the membrane. Its activity is regulated as follows. In the inactive state, the N terminus protrudes into the active site of the Rho-GAP domain, sterically blocking Rac binding. Phospholipid binding to the Phorbol-ester/DAG-type zinc-finger/C1 domain triggers the cooperative dissociation of these interactions, allowing the N-terminus to move out of the active site and thereby activating the enzyme. Its function is as follows. GTPase-activating protein for p21-rac. This Mus musculus (Mouse) protein is Beta-chimaerin (Chn2).